We begin with the raw amino-acid sequence, 249 residues long: (2S)-[(R)-hydroxy(phenyl)methyl]succinyl-CoA dehydrogenase subunit BbsC (249 aa).

It belongs to the short-chain dehydrogenases/reductases (SDR) family. Heterotetramer composed of 2 inactive BbsC subunits and 2 active BbsD subunits.

It participates in xenobiotic degradation; toluene degradation. Its function is as follows. Involved in an anaerobic toluene degradation pathway. Catalytically inactive subunit, which is probably required for the structural and/or regulatory integrity of the catalytic subunit BbsD. This subunit cannot bind NAD(+) or substrate. This is (2S)-[(R)-hydroxy(phenyl)methyl]succinyl-CoA dehydrogenase subunit BbsC from Thauera aromatica.